A 277-amino-acid polypeptide reads, in one-letter code: Thymidylate synthase (277 aa).

R21 is a dUMP binding site. A (6R)-5,10-methylene-5,6,7,8-tetrahydrofolate-binding site is contributed by H51. 126–127 provides a ligand contact to dUMP; that stretch reads RR. The active-site Nucleophile is C159. Residues 179 to 182, N190, and 220 to 222 contribute to the dUMP site; these read RSAD and HLY. D182 is a binding site for (6R)-5,10-methylene-5,6,7,8-tetrahydrofolate. Position 276 (A276) interacts with (6R)-5,10-methylene-5,6,7,8-tetrahydrofolate.

Belongs to the thymidylate synthase family. Bacterial-type ThyA subfamily. As to quaternary structure, homodimer.

It localises to the cytoplasm. It carries out the reaction dUMP + (6R)-5,10-methylene-5,6,7,8-tetrahydrofolate = 7,8-dihydrofolate + dTMP. It participates in pyrimidine metabolism; dTTP biosynthesis. Functionally, catalyzes the reductive methylation of 2'-deoxyuridine-5'-monophosphate (dUMP) to 2'-deoxythymidine-5'-monophosphate (dTMP) while utilizing 5,10-methylenetetrahydrofolate (mTHF) as the methyl donor and reductant in the reaction, yielding dihydrofolate (DHF) as a by-product. This enzymatic reaction provides an intracellular de novo source of dTMP, an essential precursor for DNA biosynthesis. The protein is Thymidylate synthase of Thioalkalivibrio sulfidiphilus (strain HL-EbGR7).